Reading from the N-terminus, the 141-residue chain is Nucleoside diphosphate kinase (141 aa).

The ATP site is built by lysine 11, phenylalanine 59, arginine 87, threonine 93, arginine 104, and asparagine 114. The active-site Pros-phosphohistidine intermediate is the histidine 117.

It belongs to the NDK family. In terms of assembly, homotetramer. Mg(2+) is required as a cofactor.

The protein resides in the cytoplasm. The catalysed reaction is a 2'-deoxyribonucleoside 5'-diphosphate + ATP = a 2'-deoxyribonucleoside 5'-triphosphate + ADP. The enzyme catalyses a ribonucleoside 5'-diphosphate + ATP = a ribonucleoside 5'-triphosphate + ADP. Functionally, major role in the synthesis of nucleoside triphosphates other than ATP. The ATP gamma phosphate is transferred to the NDP beta phosphate via a ping-pong mechanism, using a phosphorylated active-site intermediate. The chain is Nucleoside diphosphate kinase from Actinobacillus succinogenes (strain ATCC 55618 / DSM 22257 / CCUG 43843 / 130Z).